An 81-amino-acid chain; its full sequence is Cytochrome b559 subunit alpha (81 aa).

Residues valine 21–tryptophan 35 form a helical membrane-spanning segment. Histidine 23 is a heme binding site.

Belongs to the PsbE/PsbF family. In terms of assembly, heterodimer of an alpha subunit and a beta subunit. PSII is composed of 1 copy each of membrane proteins PsbA, PsbB, PsbC, PsbD, PsbE, PsbF, PsbH, PsbI, PsbJ, PsbK, PsbL, PsbM, PsbT, PsbX, PsbY, PsbZ, Psb30/Ycf12, peripheral proteins PsbO, CyanoQ (PsbQ), PsbU, PsbV and a large number of cofactors. It forms dimeric complexes. Requires heme b as cofactor.

The protein resides in the cellular thylakoid membrane. This b-type cytochrome is tightly associated with the reaction center of photosystem II (PSII). PSII is a light-driven water:plastoquinone oxidoreductase that uses light energy to abstract electrons from H(2)O, generating O(2) and a proton gradient subsequently used for ATP formation. It consists of a core antenna complex that captures photons, and an electron transfer chain that converts photonic excitation into a charge separation. The sequence is that of Cytochrome b559 subunit alpha from Picosynechococcus sp. (strain ATCC 27264 / PCC 7002 / PR-6) (Agmenellum quadruplicatum).